Here is a 316-residue protein sequence, read N- to C-terminus: L-lactate dehydrogenase (316 aa).

NAD(+) contacts are provided by residues valine 15, aspartate 37, lysine 42, tyrosine 68, and 82 to 83 (GL). Substrate-binding positions include glutamine 85, arginine 91, and 123-126 (NPVD). NAD(+)-binding positions include 121–123 (ASN) and threonine 146. A substrate-binding site is contributed by 151-154 (DTSR). Positions 156 and 171 each coordinate beta-D-fructose 1,6-bisphosphate. Catalysis depends on histidine 178, which acts as the Proton acceptor. Phosphotyrosine is present on tyrosine 222. Residue threonine 231 coordinates substrate.

Belongs to the LDH/MDH superfamily. LDH family. As to quaternary structure, homotetramer.

The protein localises to the cytoplasm. The enzyme catalyses (S)-lactate + NAD(+) = pyruvate + NADH + H(+). It participates in fermentation; pyruvate fermentation to lactate; (S)-lactate from pyruvate: step 1/1. Allosterically activated by fructose 1,6-bisphosphate (FBP). Its function is as follows. Catalyzes the conversion of lactate to pyruvate. The protein is L-lactate dehydrogenase of Borreliella burgdorferi (strain ATCC 35210 / DSM 4680 / CIP 102532 / B31) (Borrelia burgdorferi).